A 125-amino-acid polypeptide reads, in one-letter code: MSNPQQLRYSKEHEWLSGAEDGVSTVGITEHAANALGDVVFVQLPEVGDSVTAGETCGELESTKSVSDLYSPVSGEITEVNEDVVNDPSLVNSAPFEGGWLFKVRITDEPADLLSADEYTAFAGA.

The 83-residue stretch at 23 to 105 folds into the Lipoyl-binding domain; sequence VSTVGITEHA…FEGGWLFKVR (83 aa). Position 64 is an N6-lipoyllysine (lysine 64).

Belongs to the GcvH family. The glycine cleavage system is composed of four proteins: P, T, L and H. It depends on (R)-lipoate as a cofactor.

Its function is as follows. The glycine cleavage system catalyzes the degradation of glycine. The H protein shuttles the methylamine group of glycine from the P protein to the T protein. In Streptomyces coelicolor (strain ATCC BAA-471 / A3(2) / M145), this protein is Glycine cleavage system H protein.